The primary structure comprises 492 residues: Transmembrane protein 39B (492 aa).

The segment at 1 to 53 (MGGRRGPNRTSYYRNPLCEPGSSGASGGGHSSSASVSSVRSRSRTTSGTGLSS) is disordered. The N-linked (GlcNAc...) asparagine glycan is linked to Asn-8. Over residues 31 to 53 (SSSASVSSVRSRSRTTSGTGLSS) the composition is skewed to low complexity. The next 8 helical transmembrane spans lie at 77–97 (SILF…VHYI), 115–135 (TSLN…IVLG), 153–175 (SLFR…GWSL), 185–205 (TYSF…IPFL), 288–308 (EVLV…VWFV), 322–342 (LFLL…LPAS), 421–441 (ILNI…YSLM), and 447–467 (HQTI…FKLL).

The protein belongs to the TMEM39 family.

The protein resides in the endoplasmic reticulum membrane. May protect the cells against DNA damage caused by exposure to the cold-warming stress and facilitates tissue damage repair during the recovery phase. The sequence is that of Transmembrane protein 39B from Rattus norvegicus (Rat).